Reading from the N-terminus, the 143-residue chain is Small ribosomal subunit protein bS6 (143 aa).

A disordered region spans residues 100–143 (QSFIMKSKDDKGDKPERRRRDDDESGDVGVSNDSDNDGGNAEAA). A compositionally biased stretch (basic and acidic residues) spans 105–121 (KSKDDKGDKPERRRRDD). The span at 126-143 (DVGVSNDSDNDGGNAEAA) shows a compositional bias: low complexity.

It belongs to the bacterial ribosomal protein bS6 family.

Functionally, binds together with bS18 to 16S ribosomal RNA. This is Small ribosomal subunit protein bS6 from Xylella fastidiosa (strain M12).